A 327-amino-acid chain; its full sequence is Ribosomal RNA small subunit methyltransferase H (327 aa).

S-adenosyl-L-methionine is bound by residues 36-38 (GGH), aspartate 61, phenylalanine 88, aspartate 114, and glutamine 121.

The protein belongs to the methyltransferase superfamily. RsmH family.

Its subcellular location is the cytoplasm. It carries out the reaction cytidine(1402) in 16S rRNA + S-adenosyl-L-methionine = N(4)-methylcytidine(1402) in 16S rRNA + S-adenosyl-L-homocysteine + H(+). In terms of biological role, specifically methylates the N4 position of cytidine in position 1402 (C1402) of 16S rRNA. In Chlorobium luteolum (strain DSM 273 / BCRC 81028 / 2530) (Pelodictyon luteolum), this protein is Ribosomal RNA small subunit methyltransferase H.